We begin with the raw amino-acid sequence, 65 residues long: Large ribosomal subunit protein uL29 (65 aa).

The protein belongs to the universal ribosomal protein uL29 family.

The polypeptide is Large ribosomal subunit protein uL29 (Desulforamulus reducens (strain ATCC BAA-1160 / DSM 100696 / MI-1) (Desulfotomaculum reducens)).